The primary structure comprises 504 residues: Protein phosphatase 1J (504 aa).

Disordered regions lie at residues 1-102 (MLNR…RLPW) and 194-217 (PLCLPSTPGTPGVSSPSQLVSPQS). The span at 14–23 (SSSGTSSQRS) shows a compositional bias: low complexity. Thr-41 carries the phosphothreonine modification. Polar residues predominate over residues 59-73 (TAETPVSFSRPTFLQ). Phosphoserine is present on residues Ser-65 and Ser-75. Residues 103 to 496 (STGYAEVINA…DDISVFVIPL (394 aa)) form the PPM-type phosphatase domain. The segment covering 197–217 (LPSTPGTPGVSSPSQLVSPQS) has biased composition (low complexity).

The protein belongs to the PP2C family. As to quaternary structure, interacts with UBE2I/UBC9.

The enzyme catalyses O-phospho-L-seryl-[protein] + H2O = L-seryl-[protein] + phosphate. It catalyses the reaction O-phospho-L-threonyl-[protein] + H2O = L-threonyl-[protein] + phosphate. The polypeptide is Protein phosphatase 1J (Ppm1j) (Rattus norvegicus (Rat)).